The sequence spans 373 residues: Integrator complex subunit 15 (373 aa).

This sequence belongs to the Integrator subunit 15 family. Belongs to the multiprotein complex Integrator, at least composed of IntS1, IntS2, IntS3, IntS4, omd/IntS5, IntS6, defl/IntS7, IntS8, IntS9, IntS10, IntS11, IntS12, asun/IntS13, IntS14 and IntS15. The core complex associates with protein phosphatase 2A subunits mts/PP2A and Pp2A-29B, to form the Integrator-PP2A (INTAC) complex.

Its subcellular location is the nucleus. Its function is as follows. Component of the integrator complex, a multiprotein complex that terminates RNA polymerase II (Pol II) transcription in the promoter-proximal region of genes. The integrator complex provides a quality checkpoint during transcription elongation by driving premature transcription termination of transcripts that are unfavorably configured for transcriptional elongation: the complex terminates transcription by (1) catalyzing dephosphorylation of the C-terminal domain (CTD) of Pol II subunit Rbp1 and Spt5, and (2) degrading the exiting nascent RNA transcript via endonuclease activity. The integrator complex is also involved in the 3'-end processing of the U7 snRNA, and also the spliceosomal snRNAs U1, U2, U4 and U5. The protein is Integrator complex subunit 15 of Drosophila melanogaster (Fruit fly).